The following is a 374-amino-acid chain: N5-carboxyaminoimidazole ribonucleotide synthase (374 aa).

ATP-binding positions include Arg-108, Lys-148, 153–159, 183–186, Glu-191, His-214, and 266–267; these read GYDGKGQ, EKYL, and NE. An ATP-grasp domain is found at 112-296; sequence KETLKSAGTK…QFDTHILAVT (185 aa).

This sequence belongs to the PurK/PurT family. As to quaternary structure, homodimer.

The catalysed reaction is 5-amino-1-(5-phospho-beta-D-ribosyl)imidazole + hydrogencarbonate + ATP = 5-carboxyamino-1-(5-phospho-D-ribosyl)imidazole + ADP + phosphate + 2 H(+). It functions in the pathway purine metabolism; IMP biosynthesis via de novo pathway; 5-amino-1-(5-phospho-D-ribosyl)imidazole-4-carboxylate from 5-amino-1-(5-phospho-D-ribosyl)imidazole (N5-CAIR route): step 1/2. Catalyzes the ATP-dependent conversion of 5-aminoimidazole ribonucleotide (AIR) and HCO(3)(-) to N5-carboxyaminoimidazole ribonucleotide (N5-CAIR). The sequence is that of N5-carboxyaminoimidazole ribonucleotide synthase from Staphylococcus aureus (strain COL).